Here is a 141-residue protein sequence, read N- to C-terminus: Large ribosomal subunit protein uL22 (141 aa).

Positions lysine 108 to serine 141 are disordered. A compositionally biased stretch (low complexity) spans lysine 117–lysine 134.

Belongs to the universal ribosomal protein uL22 family. In terms of assembly, part of the 50S ribosomal subunit.

In terms of biological role, this protein binds specifically to 23S rRNA; its binding is stimulated by other ribosomal proteins, e.g. L4, L17, and L20. It is important during the early stages of 50S assembly. It makes multiple contacts with different domains of the 23S rRNA in the assembled 50S subunit and ribosome. The globular domain of the protein is located near the polypeptide exit tunnel on the outside of the subunit, while an extended beta-hairpin is found that lines the wall of the exit tunnel in the center of the 70S ribosome. The polypeptide is Large ribosomal subunit protein uL22 (Campylobacter jejuni subsp. jejuni serotype O:2 (strain ATCC 700819 / NCTC 11168)).